The following is a 228-amino-acid chain: Adenosylcobinamide-GDP ribazoletransferase (228 aa).

The next 6 helical transmembrane spans lie at 24–44 (VWMLPLLTPLTAFIPSLILYL), 50–70 (NVLSILSLYWVIGLLHLDGLA), 96–116 (IAGTFAVVMILLIQVYSLFSA), 117–137 (PFYSIYLAELNSKMAMLLALA), 159–176 (VFLGGVLYALLLIPILLY), and 181–198 (IFALLGLVGGIYAVKISL).

This sequence belongs to the CobS family. The cofactor is Mg(2+).

Its subcellular location is the cell membrane. The catalysed reaction is alpha-ribazole + adenosylcob(III)inamide-GDP = adenosylcob(III)alamin + GMP + H(+). The enzyme catalyses alpha-ribazole 5'-phosphate + adenosylcob(III)inamide-GDP = adenosylcob(III)alamin 5'-phosphate + GMP + H(+). It functions in the pathway cofactor biosynthesis; adenosylcobalamin biosynthesis; adenosylcobalamin from cob(II)yrinate a,c-diamide: step 7/7. Functionally, joins adenosylcobinamide-GDP and alpha-ribazole to generate adenosylcobalamin (Ado-cobalamin). Also synthesizes adenosylcobalamin 5'-phosphate from adenosylcobinamide-GDP and alpha-ribazole 5'-phosphate. This Pyrococcus furiosus (strain ATCC 43587 / DSM 3638 / JCM 8422 / Vc1) protein is Adenosylcobinamide-GDP ribazoletransferase.